The primary structure comprises 255 residues: Triosephosphate isomerase (255 aa).

9-11 (NWK) lines the substrate pocket. Catalysis depends on His-96, which acts as the Electrophile. Glu-168 (proton acceptor) is an active-site residue. Substrate-binding residues include Gly-174 and Ser-213.

The protein belongs to the triosephosphate isomerase family. In terms of assembly, homodimer.

The protein resides in the cytoplasm. It carries out the reaction D-glyceraldehyde 3-phosphate = dihydroxyacetone phosphate. It participates in carbohydrate biosynthesis; gluconeogenesis. It functions in the pathway carbohydrate degradation; glycolysis; D-glyceraldehyde 3-phosphate from glycerone phosphate: step 1/1. In terms of biological role, involved in the gluconeogenesis. Catalyzes stereospecifically the conversion of dihydroxyacetone phosphate (DHAP) to D-glyceraldehyde-3-phosphate (G3P). In Buchnera aphidicola subsp. Acyrthosiphon pisum (strain APS) (Acyrthosiphon pisum symbiotic bacterium), this protein is Triosephosphate isomerase.